The following is a 175-amino-acid chain: NADH-ubiquinone oxidoreductase chain 6 (175 aa).

A run of 5 helical transmembrane segments spans residues 1-21 (MMIY…VGFS), 25-45 (SPIY…GIVM), 47-67 (FGGS…MLVV), 88-108 (TVLS…LYMF), and 149-169 (YGVW…LVVL).

It belongs to the complex I subunit 6 family. In terms of assembly, core subunit of respiratory chain NADH dehydrogenase (Complex I) which is composed of 45 different subunits.

The protein localises to the mitochondrion inner membrane. The enzyme catalyses a ubiquinone + NADH + 5 H(+)(in) = a ubiquinol + NAD(+) + 4 H(+)(out). Core subunit of the mitochondrial membrane respiratory chain NADH dehydrogenase (Complex I) which catalyzes electron transfer from NADH through the respiratory chain, using ubiquinone as an electron acceptor. Essential for the catalytic activity and assembly of complex I. This is NADH-ubiquinone oxidoreductase chain 6 (MT-ND6) from Rhinoceros unicornis (Greater Indian rhinoceros).